Reading from the N-terminus, the 412-residue chain is uncharacterized protein (412 aa).

A run of 11 helical transmembrane segments spans residues 17–37 (LLLALALTMGVFAAGSEELVI), 54–74 (VLALSISIYGVMIFIGAPLLV), 91–111 (MIFIIGTVICALAQNIFFFFL), 112–132 (GRALSGLAAGAFVPTAYAVVG), 146–166 (LIVSSWSLALIFGVPLGSFIG), 173–193 (WTFWIFALMGVLVVLLILLEM), 225–245 (VYITITFCNMIGFYGMYSFLG), 257–277 (TAAGLFIMIYGIGFSMSVITG), 299–319 (LLACLPYAPASMFLLIASLFI), 346–366 (VMVFYSLASNLAVTLGSALMG), and 375–395 (AAVGLICAAITVLGFVLSVFA).

Belongs to the major facilitator superfamily.

Its subcellular location is the cell membrane. This is an uncharacterized protein from Bacillus subtilis (strain 168).